Here is a 94-residue protein sequence, read N- to C-terminus: Co-chaperonin GroES (94 aa).

It belongs to the GroES chaperonin family. As to quaternary structure, heptamer of 7 subunits arranged in a ring. Interacts with the chaperonin GroEL.

It is found in the cytoplasm. In terms of biological role, together with the chaperonin GroEL, plays an essential role in assisting protein folding. The GroEL-GroES system forms a nano-cage that allows encapsulation of the non-native substrate proteins and provides a physical environment optimized to promote and accelerate protein folding. GroES binds to the apical surface of the GroEL ring, thereby capping the opening of the GroEL channel. This is Co-chaperonin GroES from Orientia tsutsugamushi (Rickettsia tsutsugamushi).